The sequence spans 407 residues: Phosphopentomutase (407 aa).

Positions 11, 305, 310, 346, 347, and 358 each coordinate Mn(2+).

It belongs to the phosphopentomutase family. It depends on Mn(2+) as a cofactor.

It localises to the cytoplasm. It catalyses the reaction 2-deoxy-alpha-D-ribose 1-phosphate = 2-deoxy-D-ribose 5-phosphate. It carries out the reaction alpha-D-ribose 1-phosphate = D-ribose 5-phosphate. It participates in carbohydrate degradation; 2-deoxy-D-ribose 1-phosphate degradation; D-glyceraldehyde 3-phosphate and acetaldehyde from 2-deoxy-alpha-D-ribose 1-phosphate: step 1/2. Functionally, isomerase that catalyzes the conversion of deoxy-ribose 1-phosphate (dRib-1-P) and ribose 1-phosphate (Rib-1-P) to deoxy-ribose 5-phosphate (dRib-5-P) and ribose 5-phosphate (Rib-5-P), respectively. The sequence is that of Phosphopentomutase from Legionella pneumophila subsp. pneumophila (strain Philadelphia 1 / ATCC 33152 / DSM 7513).